The primary structure comprises 354 residues: NAD-dependent epimerase/dehydratase ALT6 (354 aa).

NADP(+)-binding residues include lysine 41 and tyrosine 174.

This sequence belongs to the NAD(P)-dependent epimerase/dehydratase family. Dihydroflavonol-4-reductase subfamily.

It functions in the pathway mycotoxin biosynthesis. Its function is as follows. NAD-dependent epimerase/dehydratase; part of the gene cluster that mediates the biosynthesis of the host-selective toxins (HSTs) AAL-toxins, sphinganine-analog mycotoxins responsible for Alternaria stem canker on tomato by the tomato pathotype. The biosynthesis starts with the polyketide synthase ALT1-catalyzed C-16 carbon chain assembly from one starter acetyl-CoA unit with malonyl-CoA extender units. ALT1 also selectively transfers methyl groups at the first and the third cycle of chain elongation for AAL toxin. The C-16 polyketide chain is released from the enzyme by a nucleophilic attack of a carbanion, which is derived from R-carbon of glycin by decarboxylation, on the carbonyl carbon of polyketide acyl chain. This step is probably catalyzed by a pyridoxal 5'-phosphate-dependent aminoacyl transferase ALT4. The respective functions of the other enzymes encoded by the cluster have still to be elucidated. The sphingosine N-acyltransferase-like protein ALT7 seems not to act as a resistance/self-tolerance factor against the toxin in the toxin biosynthetic gene cluster, contrary to what is expected. This is NAD-dependent epimerase/dehydratase ALT6 from Alternaria alternata (Alternaria rot fungus).